A 170-amino-acid polypeptide reads, in one-letter code: Inducible metalloproteinase inhibitor protein (170 aa).

Residues 1–19 (MKCLLYLCLWCYCVLVSSS) form the signal peptide. N-linked (GlcNAc...) asparagine glycosylation is found at asparagine 48 and asparagine 149.

Post-translationally, cleaved. Five disulfide bonds are present. When artificially cleaved by thermolysin between Asn-56 and Ile-57, the two obtained chains (called heavy and light chains) remain linked. In terms of processing, the N-terminus is blocked.

In terms of biological role, inhibits thermolysin, bacillolysin and pseudolysin, B.polymyxa metalloprotease and human MMP1 and MMP3. No activity on trypsin or cysteine protease papain. The protein is Inducible metalloproteinase inhibitor protein (IMPI) of Galleria mellonella (Greater wax moth).